Reading from the N-terminus, the 63-residue chain is Chymotrypsin/elastase isoinhibitor 1 (63 aa).

Intrachain disulfides connect cysteine 5/cysteine 38, cysteine 14/cysteine 33, cysteine 17/cysteine 29, cysteine 21/cysteine 60, and cysteine 40/cysteine 54. Residues 5–60 (CGPNEVWTECTGCEMKCGPDENTPCPLMCRRPSCECSPGRGMRRTNDGKCIPASQC) enclose the TIL domain.

It belongs to the serine protease inhibitor-like (TIL domain-containing) family.

It is found in the secreted. Its function is as follows. Defends the organism against the host's proteinases. This is Chymotrypsin/elastase isoinhibitor 1 from Ascaris suum (Pig roundworm).